The following is a 453-amino-acid chain: GTPase Der (453 aa).

2 EngA-type G domains span residues proline 3 to lysine 167 and valine 188 to glutamine 361. GTP is bound by residues glycine 9 to serine 16, aspartate 57 to isoleucine 61, asparagine 119 to aspartate 122, glycine 194 to serine 201, aspartate 241 to methionine 245, and asparagine 306 to aspartate 309. One can recognise a KH-like domain in the interval lysine 362–methionine 446.

This sequence belongs to the TRAFAC class TrmE-Era-EngA-EngB-Septin-like GTPase superfamily. EngA (Der) GTPase family. As to quaternary structure, associates with the 50S ribosomal subunit.

In terms of biological role, GTPase that plays an essential role in the late steps of ribosome biogenesis. In Buchnera aphidicola subsp. Schizaphis graminum (strain Sg), this protein is GTPase Der.